Reading from the N-terminus, the 631-residue chain is Probable potassium transport system protein Kup (631 aa).

12 helical membrane-spanning segments follow: residues isoleucine 17–tyrosine 37, isoleucine 56–methionine 76, methionine 109–threonine 129, glycine 147–glutamine 167, isoleucine 174–valine 194, phenylalanine 215–threonine 235, tryptophan 256–leucine 276, leucine 288–isoleucine 308, isoleucine 346–phenylalanine 366, valine 378–leucine 398, proline 403–alanine 423, and isoleucine 428–threonine 448.

It belongs to the HAK/KUP transporter (TC 2.A.72) family.

Its subcellular location is the cell inner membrane. The catalysed reaction is K(+)(in) + H(+)(in) = K(+)(out) + H(+)(out). Its function is as follows. Transport of potassium into the cell. Likely operates as a K(+):H(+) symporter. In Pseudomonas savastanoi pv. phaseolicola (strain 1448A / Race 6) (Pseudomonas syringae pv. phaseolicola (strain 1448A / Race 6)), this protein is Probable potassium transport system protein Kup.